The primary structure comprises 104 residues: Salivary protein FS145 (104 aa).

An N-terminal signal peptide occupies residues 1–18 (MKLFAVFLLFCLVNQIYC). Intrachain disulfides connect Cys-32–Cys-80, Cys-62–Cys-89, Cys-72–Cys-100, and Cys-76–Cys-102. A Putative integrin attachment site; atypical (WGD) motif is present at residues 92–94 (WGD).

As to quaternary structure, interacts with host integrin alpha-V/beta-3 (ITGAV:ITGB3).

It localises to the secreted. Inhibits proliferation, adhesion and migration of host cells as well as host angiogenesis by blocking host integrin alpha-V/beta-3 (ITGAV:ITGB3). This Xenopsylla cheopis (Oriental rat flea) protein is Salivary protein FS145.